Here is a 651-residue protein sequence, read N- to C-terminus: Carboxypeptidase S1 homolog A (651 aa).

The first 19 residues, 1–19, serve as a signal peptide directing secretion; sequence MHLATGLAVALPFIGAASA. Cysteine 50 and cysteine 121 are disulfide-bonded. N-linked (GlcNAc...) asparagine glycans are attached at residues asparagine 77, asparagine 125, asparagine 128, asparagine 161, asparagine 184, and asparagine 202. Serine 238 is an active-site residue. Asparagine 260, asparagine 299, asparagine 308, asparagine 347, and asparagine 410 each carry an N-linked (GlcNAc...) asparagine glycan. 2 disulfide bridges follow: cysteine 325/cysteine 361 and cysteine 332/cysteine 354. The active site involves aspartate 458. Cysteine 461 serves as a coordination point for substrate. 2 N-linked (GlcNAc...) asparagine glycosylation sites follow: asparagine 474 and asparagine 504. Residue histidine 515 is part of the active site. Glutamate 516 is a binding site for substrate. The disordered stretch occupies residues 604–630; the sequence is KSPAGKKQGPPPTSTSPPSPTSSSEGS. Over residues 612 to 623 the composition is skewed to pro residues; the sequence is GPPPTSTSPPSP. The GPI-anchor amidated serine moiety is linked to residue serine 625. Residues 626 to 651 constitute a propeptide, removed in mature form; it reads SSEGSVKEFSVSVLGVSVLAAITFFL.

This sequence belongs to the peptidase S10 family.

The protein resides in the cell membrane. It catalyses the reaction Preferential release of a C-terminal arginine or lysine residue.. In terms of biological role, extracellular serine carboxypeptidase that contributes to pathogenicity. This chain is Carboxypeptidase S1 homolog A (SCPA), found in Arthroderma otae (strain ATCC MYA-4605 / CBS 113480) (Microsporum canis).